A 391-amino-acid polypeptide reads, in one-letter code: MTQLFDTLGFIETSAVRAGAAARDAHGAHQEAATRADVAAVSLVHVGKVFATPRGHAAALRDVTFDVRRGEVFGIIGRSGAGKSTLLRLVNGLERPSSGSVRVQGVDVGALDEDGLVALRRRTGMVFQHFNLLSAKTVFENVALPLKIAGVPKAERTRKVDALLDLVGLAAKRDAYPASLSGGQKQRVGIARALVHDPEVLLCDEATSALDPETTQSILALLADINRRLGLTIVLITHEMEVIRAVCDTVAVIEQGELVETGPVWRVFGDPRHGATRALLSTLVHDLPAELAARVQPLPEQAALPDGAQVVLDVRYTGESGGEPDVGALAAALGGSVRFLHGGIERIQGHAQGRLVIAASPGQSLAHGGAVAALLERARRHANHAEVLGYV.

Positions 44-280 (VHVGKVFATP…PRHGATRALL (237 aa)) constitute an ABC transporter domain. 77-84 (GRSGAGKS) lines the ATP pocket.

This sequence belongs to the ABC transporter superfamily. Methionine importer (TC 3.A.1.24) family. The complex is composed of two ATP-binding proteins (MetN), two transmembrane proteins (MetI) and a solute-binding protein (MetQ).

It localises to the cell inner membrane. The catalysed reaction is L-methionine(out) + ATP + H2O = L-methionine(in) + ADP + phosphate + H(+). The enzyme catalyses D-methionine(out) + ATP + H2O = D-methionine(in) + ADP + phosphate + H(+). Part of the ABC transporter complex MetNIQ involved in methionine import. Responsible for energy coupling to the transport system. This chain is Methionine import ATP-binding protein MetN 2, found in Burkholderia ambifaria (strain ATCC BAA-244 / DSM 16087 / CCUG 44356 / LMG 19182 / AMMD) (Burkholderia cepacia (strain AMMD)).